The primary structure comprises 2769 residues: Teneurin-4 (2769 aa).

A compositionally biased stretch (basic and acidic residues) spans 1–22; it reads MDVKERKPYRSLTRRRDAERRY. The segment at 1–45 is disordered; that stretch reads MDVKERKPYRSLTRRRDAERRYTSSSADSEEGKAPQKSYSSSETL. A Teneurin N-terminal domain is found at 1–341; sequence MDVKERKPYR…KPSKYCNWKC (341 aa). At 1–345 the chain is on the cytoplasmic side; sequence MDVKERKPYR…YCNWKCAALS (345 aa). S124 is subject to Phosphoserine. A disordered region spans residues 130–233; the sequence is RLWGRSTRSG…PPAGGAQEPA (104 aa). Positions 134-155 are enriched in low complexity; that stretch reads RSTRSGRSSCLSSRANSNLTLT. A compositionally biased stretch (basic and acidic residues) spans 156–166; sequence DTEHENTETDH. A Phosphothreonine modification is found at T178. The segment covering 187 to 211 has biased composition (polar residues); that stretch reads HTPNQHHAASINSLNRGNFTPRSNP. Residues 346–366 form a helical membrane-spanning segment; that stretch reads AIVISATLVILLAYFVAMHLF. The Extracellular portion of the chain corresponds to 367–2769; that stretch reads GLNWHLQPME…FMRQSEMGRR (2403 aa). Residues 400 to 426 are disordered; that stretch reads PSGGTGLETPDRKGKGTTEGKPSSFFP. Positions 408–417 are enriched in basic and acidic residues; sequence TPDRKGKGTT. The N-linked (GlcNAc...) asparagine glycan is linked to N467. The segment at 507–526 is disordered; sequence ARSLEGTPRQSRGTVPPSSH. The span at 514–526 shows a compositional bias: polar residues; that stretch reads PRQSRGTVPPSSH. EGF-like domains lie at 562 to 593, 594 to 624, 626 to 658, 659 to 690, 692 to 725, 726 to 757, 758 to 787, and 788 to 831; these read SVDN…PDCG, RASC…AECD, PTNQ…ESCE, EVDC…TNCE, PRAT…HDCS, IEIC…ACDQ, RACH…EHCT, and IAHY…AGCD. 22 disulfide bridges follow: C566/C576, C570/C581, C583/C592, C601/C612, C614/C623, C630/C641, C635/C646, C648/C657, C662/C673, C667/C678, C680/C689, C700/C713, C715/C724, C729/C739, C733/C744, C746/C755, C760/C770, C764/C775, C777/C786, C800/C810, C804/C819, and C821/C830. N-linked (GlcNAc...) asparagine glycosylation is found at N940 and N1259. NHL repeat units lie at residues 1216-1259, 1264-1308, 1334-1378, 1393-1444, and 1523-1566; these read SCPS…PSGN, LELR…IKST, TRCG…NGII, LSCD…VAGR, and CFSG…IRKN. The YD 1 repeat unit spans residues 1576–1595; it reads YELSSPIDQELYLFDTTGKH. An N-linked (GlcNAc...) asparagine glycan is attached at N1609. 3 YD repeats span residues 1612–1632, 1675–1694, and 1695–1717; these read YTGD…VNVR, YHGN…WTTF, and YEYD…SSFR. N1705, N1741, N1799, and N1884 each carry an N-linked (GlcNAc...) asparagine glycan. 18 YD repeats span residues 1887–1906, 1928–1946, 1947–1967, 1974–1991, 1992–2013, 2014–2031, 2034–2054, 2057–2077, 2085–2104, 2110–2127, 2128–2154, 2156–2169, 2170–2193, 2196–2216, 2217–2237, 2239–2259, 2271–2291, and 2293–2313; these read YSPG…ERME, YLEK…YIFE, FDKN…QTLE, YYRN…VIQD, FTED…VIYK, YGKL…TKVS, YDET…FTCT, YRQI…EGMV, YDNS…TPLP, YDDV…GVIY, YDIN…MKEV, YEIF…MTVQ, YDNM…TRYS, YDAD…WRYS, YDLN…LTPL, YDIR…DEDG, YNSA…SVRY, and YDGL…LQFF. Residue N1985 is glycosylated (N-linked (GlcNAc...) asparagine). Residue N2188 is glycosylated (N-linked (GlcNAc...) asparagine). Residue N2328 is glycosylated (N-linked (GlcNAc...) asparagine). A YD 23 repeat occupies 2339 to 2380; the sequence is YDLQGHLFAMELSSGDEFYIACDNIGTPLAVFSGTGLMIKQI. An N-linked (GlcNAc...) asparagine glycan is attached at N2646.

Belongs to the tenascin family. Teneurin subfamily. Homodimer; disulfide-linked. May also form heterodimer with either TENM1 or TENM2 or TENM3.

It is found in the cell membrane. It localises to the cell projection. The protein resides in the nucleus. Its subcellular location is the cytoplasm. Its function is as follows. Involved in neural development, regulating the establishment of proper connectivity within the nervous system. Plays a role in the establishment of the anterior-posterior axis during gastrulation. Regulates the differentiation and cellular process formation of oligodendrocytes and myelination of small-diameter axons in the central nervous system (CNS). Promotes activation of focal adhesion kinase. May function as a cellular signal transducer. This Homo sapiens (Human) protein is Teneurin-4 (TENM4).